A 319-amino-acid chain; its full sequence is Taste receptor type 2 member 30 (319 aa).

Position 1 (Met-1) is a topological domain, extracellular. The helical transmembrane segment at 2-22 (ITFLPIIFSILIVVIFVIGNF) threads the bilayer. Residues 23–46 (ANGFIALVNSIEWVKRQKISFADQ) are Cytoplasmic-facing. Residues 47–67 (ILIALAVSRVGLLWALLLHWY) form a helical membrane-spanning segment. The Extracellular segment spans residues 68–86 (ATELNLAFYSVEVRITAYN). The helical transmembrane segment at 87-107 (VWAVTNHFSNWLATSLSMFYL) threads the bilayer. Topologically, residues 108–126 (LKIANFSNLIFLRIKRRVK) are cytoplasmic. Residues 127-147 (SVILVILLGPLLFLVCHLFVI) form a helical membrane-spanning segment. Topologically, residues 148-178 (NMNEIVWTKEYEGNLTWKIKLRNAVFLSNMT) are extracellular. 2 N-linked (GlcNAc...) asparagine glycosylation sites follow: Asn-161 and Asn-176. Residues 179–199 (LTMLANFVPLTLTLISFLLLI) traverse the membrane as a helical segment. The Cytoplasmic segment spans residues 200 to 229 (CSLCKHLKKMQLHGKGSQDPSTKVHIKALQ). The chain crosses the membrane as a helical span at residues 230-250 (TVTCFLLLCAIYFLSMIISVY). The Extracellular portion of the chain corresponds to 251–259 (NFGRLEKKP). A helical membrane pass occupies residues 260–280 (VFMFCQAITFSYPSTHAFILI). The Cytoplasmic portion of the chain corresponds to 281 to 319 (WGNKKLKQIFLSVLWHVRYWVKDRSLRLHRFTRAALCKG).

The protein belongs to the G-protein coupled receptor T2R family.

It localises to the membrane. Its function is as follows. Receptor that may play a role in the perception of bitterness and is gustducin-linked. May play a role in sensing the chemical composition of the gastrointestinal content. The activity of this receptor may stimulate alpha gustducin, mediate PLC-beta-2 activation and lead to the gating of TRPM5. This Pongo pygmaeus (Bornean orangutan) protein is Taste receptor type 2 member 30 (TAS2R30).